Consider the following 483-residue polypeptide: UDP-N-acetylmuramoyl-L-alanyl-D-glutamate--2,6-diaminopimelate ligase (483 aa).

Ser30 provides a ligand contact to UDP-N-acetyl-alpha-D-muramoyl-L-alanyl-D-glutamate. 109-115 (GTNGKTT) is an ATP binding site. UDP-N-acetyl-alpha-D-muramoyl-L-alanyl-D-glutamate is bound by residues 151-152 (TT), Ser178, and Arg186. Lys218 bears the N6-carboxylysine mark. Meso-2,6-diaminopimelate contacts are provided by residues Arg380, 403–406 (DNPR), Gly453, and Glu457. Positions 403 to 406 (DNPR) match the Meso-diaminopimelate recognition motif motif.

Belongs to the MurCDEF family. MurE subfamily. Mg(2+) is required as a cofactor. Post-translationally, carboxylation is probably crucial for Mg(2+) binding and, consequently, for the gamma-phosphate positioning of ATP.

It localises to the cytoplasm. It carries out the reaction UDP-N-acetyl-alpha-D-muramoyl-L-alanyl-D-glutamate + meso-2,6-diaminopimelate + ATP = UDP-N-acetyl-alpha-D-muramoyl-L-alanyl-gamma-D-glutamyl-meso-2,6-diaminopimelate + ADP + phosphate + H(+). Its pathway is cell wall biogenesis; peptidoglycan biosynthesis. In terms of biological role, catalyzes the addition of meso-diaminopimelic acid to the nucleotide precursor UDP-N-acetylmuramoyl-L-alanyl-D-glutamate (UMAG) in the biosynthesis of bacterial cell-wall peptidoglycan. In Chlamydia abortus (strain DSM 27085 / S26/3) (Chlamydophila abortus), this protein is UDP-N-acetylmuramoyl-L-alanyl-D-glutamate--2,6-diaminopimelate ligase.